Here is a 170-residue protein sequence, read N- to C-terminus: Cyclic pyranopterin monophosphate synthase (170 aa).

Residues 75–77 (MCH) and 115–116 (ME) contribute to the substrate site. The active site involves Asp-130.

Belongs to the MoaC family. Homohexamer; trimer of dimers.

It catalyses the reaction (8S)-3',8-cyclo-7,8-dihydroguanosine 5'-triphosphate = cyclic pyranopterin phosphate + diphosphate. Its pathway is cofactor biosynthesis; molybdopterin biosynthesis. In terms of biological role, catalyzes the conversion of (8S)-3',8-cyclo-7,8-dihydroguanosine 5'-triphosphate to cyclic pyranopterin monophosphate (cPMP). This chain is Cyclic pyranopterin monophosphate synthase, found in Bacillus subtilis (strain 168).